The sequence spans 84 residues: Putative regulatory protein Hore_09800 (84 aa).

It belongs to the RemA family.

The protein is Putative regulatory protein Hore_09800 of Halothermothrix orenii (strain H 168 / OCM 544 / DSM 9562).